Here is a 304-residue protein sequence, read N- to C-terminus: Acetyl-coenzyme A carboxylase carboxyl transferase subunit beta (304 aa).

The 270-residue stretch at 23-292 folds into the CoA carboxyltransferase N-terminal domain; that stretch reads VWTKCDSCGQ…PNPEAPREGV (270 aa). Zn(2+)-binding residues include Cys27, Cys30, Cys46, and Cys49. The C4-type zinc finger occupies 27–49; that stretch reads CDSCGQVLYRAELERNLEVCPKC. The interval 284 to 304 is disordered; that stretch reads NPEAPREGVVVPPVPDQEPEA. Over residues 295-304 the composition is skewed to pro residues; it reads PPVPDQEPEA.

The protein belongs to the AccD/PCCB family. In terms of assembly, acetyl-CoA carboxylase is a heterohexamer composed of biotin carboxyl carrier protein (AccB), biotin carboxylase (AccC) and two subunits each of ACCase subunit alpha (AccA) and ACCase subunit beta (AccD). It depends on Zn(2+) as a cofactor.

It is found in the cytoplasm. The catalysed reaction is N(6)-carboxybiotinyl-L-lysyl-[protein] + acetyl-CoA = N(6)-biotinyl-L-lysyl-[protein] + malonyl-CoA. It participates in lipid metabolism; malonyl-CoA biosynthesis; malonyl-CoA from acetyl-CoA: step 1/1. Functionally, component of the acetyl coenzyme A carboxylase (ACC) complex. Biotin carboxylase (BC) catalyzes the carboxylation of biotin on its carrier protein (BCCP) and then the CO(2) group is transferred by the transcarboxylase to acetyl-CoA to form malonyl-CoA. This Shigella boydii serotype 4 (strain Sb227) protein is Acetyl-coenzyme A carboxylase carboxyl transferase subunit beta.